The following is a 489-amino-acid chain: Mitochondrial-processing peptidase subunit beta (489 aa).

The N-terminal 45 residues, 1-45 (MAAAAVSRTLLPVAGRRLWGFTRRLPLRAAAAQPLYFGGDRLRST), are a transit peptide targeting the mitochondrion. Histidine 101 is a binding site for Zn(2+). Residue glutamate 104 is the Proton acceptor of the active site. Residues histidine 105 and glutamate 181 each coordinate Zn(2+).

Belongs to the peptidase M16 family. As to quaternary structure, heterodimer of PMPCA (alpha) and PMPCB (beta) subunits, forming the mitochondrial processing protease (MPP) in which PMPCA is involved in substrate recognition and binding and PMPCB is the catalytic subunit. The cofactor is Zn(2+).

The protein localises to the mitochondrion matrix. It catalyses the reaction Release of N-terminal transit peptides from precursor proteins imported into the mitochondrion, typically with Arg in position P2.. Its activity is regulated as follows. Binding to PMPCA is required for catalytic activity. Functionally, catalytic subunit of the essential mitochondrial processing protease (MPP), which cleaves the mitochondrial sequence off newly imported precursors proteins. Preferentially, cleaves after an arginine at position P2. Required for PINK1 turnover by coupling PINK1 mitochondrial import and cleavage, which results in subsequent PINK1 proteolysis. In Rattus norvegicus (Rat), this protein is Mitochondrial-processing peptidase subunit beta (Pmpcb).